The following is a 585-amino-acid chain: Protein cereblon (585 aa).

Disordered regions lie at residues 1-109 (MDEE…DLES) and 156-195 (FSQE…IGFD). The span at 80 to 95 (QDDTASEGSHPSSDMS) shows a compositional bias: polar residues. Over residues 158 to 167 (QERRRSRTSE) the composition is skewed to basic and acidic residues. Residues 178-189 (VDPPPQQPPRPP) show a composition bias toward pro residues. Residues 225 to 451 (HMLIFLHQHI…LIKSTFKDET (227 aa)) form the Lon N-terminal domain. The 110-residue stretch at 450-559 (ETLFFCRYCN…LAGSSVRIGK (110 aa)) folds into the CULT domain. Zn(2+)-binding residues include C455, C458, C524, and C527.

It belongs to the CRBN family. In terms of assembly, likely a component of a DCX (DDB1-CUL4-X-box) protein ligase complex. May interact with pic/DDB1. In terms of processing, ubiquitinated. Expressed in the fat body (at protein level).

It localises to the nucleus. Its pathway is protein modification; protein ubiquitination. Functionally, substrate recognition component of a DCX (DDB1-CUL4-X-box) E3 protein ligase complex that mediates the ubiquitination and subsequent proteasomal degradation of target proteins. Has an essential role in mediating growth by negatively regulating insulin signaling. It also has a role in maintaining presynaptic function in the neuromuscular junction synapses of third-instar larvae. This Drosophila melanogaster (Fruit fly) protein is Protein cereblon.